The chain runs to 353 residues: Ferredoxin--NADP reductase 1 (353 aa).

7 residues coordinate FAD: Asp-43, Gln-51, Tyr-56, Ala-96, Phe-135, Asp-300, and Ser-341.

This sequence belongs to the ferredoxin--NADP reductase type 2 family. As to quaternary structure, homodimer. FAD is required as a cofactor.

It catalyses the reaction 2 reduced [2Fe-2S]-[ferredoxin] + NADP(+) + H(+) = 2 oxidized [2Fe-2S]-[ferredoxin] + NADPH. This Cupriavidus metallidurans (strain ATCC 43123 / DSM 2839 / NBRC 102507 / CH34) (Ralstonia metallidurans) protein is Ferredoxin--NADP reductase 1.